The primary structure comprises 320 residues: 1,5-anhydro-D-fructose reductase (320 aa).

NADP(+) is bound at residue D35. Residue Y40 is the Proton donor of the active site. Residue H102 coordinates substrate. Residues Q194 and 265 to 277 (IPGSITPSHIKEN) each bind NADP(+).

It belongs to the aldo/keto reductase family. Monomer. In terms of tissue distribution, specifically expressed in testis. Expressed in testicular germ cells and testis interstitial cells.

Its subcellular location is the cytoplasm. The catalysed reaction is 1,5-anhydro-D-glucitol + NADP(+) = 1,5-anhydro-D-fructose + NADPH + H(+). Inhibited by p-chloromercuribenzoic acid and alkyliodines. Catalyzes the NADPH-dependent reduction of 1,5-anhydro-D-fructose (AF) to 1,5-anhydro-D-glucitol. Has low NADPH-dependent reductase activity towards 9,10-phenanthrenequinone (in vitro). The polypeptide is 1,5-anhydro-D-fructose reductase (AKR1E2) (Homo sapiens (Human)).